Reading from the N-terminus, the 283-residue chain is Putative pyruvate, phosphate dikinase regulatory protein (283 aa).

Position 156 to 163 (glycine 156 to threonine 163) interacts with ADP.

Belongs to the pyruvate, phosphate/water dikinase regulatory protein family. PDRP subfamily.

It carries out the reaction N(tele)-phospho-L-histidyl/L-threonyl-[pyruvate, phosphate dikinase] + ADP = N(tele)-phospho-L-histidyl/O-phospho-L-threonyl-[pyruvate, phosphate dikinase] + AMP + H(+). The catalysed reaction is N(tele)-phospho-L-histidyl/O-phospho-L-threonyl-[pyruvate, phosphate dikinase] + phosphate + H(+) = N(tele)-phospho-L-histidyl/L-threonyl-[pyruvate, phosphate dikinase] + diphosphate. Its function is as follows. Bifunctional serine/threonine kinase and phosphorylase involved in the regulation of the pyruvate, phosphate dikinase (PPDK) by catalyzing its phosphorylation/dephosphorylation. The sequence is that of Putative pyruvate, phosphate dikinase regulatory protein from Desulfotalea psychrophila (strain LSv54 / DSM 12343).